A 541-amino-acid chain; its full sequence is Protein yellow (541 aa).

Residues 1–21 (MFQDKGWVLVTLIALVTPSWA) form the signal peptide. N144 is a glycosylation site (N-linked (GlcNAc...) asparagine).

This sequence belongs to the major royal jelly protein family.

It is found in the secreted. Its function is as follows. Controls the pigmentation pattern of the adult cuticle and larval mouth parts. The protein is Protein yellow (y) of Drosophila erecta (Fruit fly).